A 310-amino-acid polypeptide reads, in one-letter code: Aspartate carbamoyltransferase catalytic subunit (310 aa).

Residues Arg59 and Thr60 each contribute to the carbamoyl phosphate site. Lys87 provides a ligand contact to L-aspartate. 3 residues coordinate carbamoyl phosphate: Arg109, His139, and Gln142. The L-aspartate site is built by Arg172 and Arg224. Positions 265 and 266 each coordinate carbamoyl phosphate.

This sequence belongs to the aspartate/ornithine carbamoyltransferase superfamily. ATCase family. Heterododecamer (2C3:3R2) of six catalytic PyrB chains organized as two trimers (C3), and six regulatory PyrI chains organized as three dimers (R2).

The enzyme catalyses carbamoyl phosphate + L-aspartate = N-carbamoyl-L-aspartate + phosphate + H(+). It functions in the pathway pyrimidine metabolism; UMP biosynthesis via de novo pathway; (S)-dihydroorotate from bicarbonate: step 2/3. Functionally, catalyzes the condensation of carbamoyl phosphate and aspartate to form carbamoyl aspartate and inorganic phosphate, the committed step in the de novo pyrimidine nucleotide biosynthesis pathway. The polypeptide is Aspartate carbamoyltransferase catalytic subunit (Lactococcus lactis subsp. cremoris (strain MG1363)).